The sequence spans 116 residues: Transmembrane protein 213 (116 aa).

An N-terminal signal peptide occupies residues 1–35 (MAQSGVFLRNPGHLTSAPQAALLFSLVLTSFHLSC). Residues 36–79 (GTETSSSNSTLSAHHPDPGTLEQCANVDFCPLASLCCRASVDEY) lie on the Extracellular side of the membrane. A helical transmembrane segment spans residues 80-100 (GWIAAAVGWSFWFLTLILLCV). The Cytoplasmic segment spans residues 101–116 (DKLMKLTPEEPKDLAA).

It is found in the membrane. In Mus musculus (Mouse), this protein is Transmembrane protein 213 (Tmem213).